A 63-amino-acid polypeptide reads, in one-letter code: Large ribosomal subunit protein bL35 (63 aa).

It belongs to the bacterial ribosomal protein bL35 family.

The polypeptide is Large ribosomal subunit protein bL35 (Campylobacter concisus (strain 13826)).